We begin with the raw amino-acid sequence, 54 residues long: UPF0391 membrane protein Mpe_A2904 (54 aa).

Transmembrane regions (helical) follow at residues 5–25 (AVVF…GIAA) and 30–50 (IAKI…LFGL).

Belongs to the UPF0391 family.

It is found in the cell membrane. The chain is UPF0391 membrane protein Mpe_A2904 from Methylibium petroleiphilum (strain ATCC BAA-1232 / LMG 22953 / PM1).